The primary structure comprises 157 residues: MPSVESFELDHTIVKAPYVRHCGVHQVGSDGIVNKFDIRFCQPNKQAMKPDVIHTLEHLLAFNLRKYIDRYPHFDIIDISPMGCQTGYYLVVSGTPTVREIIDLLELTLKDAVQITEIPAANETQCGQAKLHDLEGAKRLMNFWLSQDKDDLEKVFG.

Residues H54, H58, and C126 each coordinate Fe cation.

This sequence belongs to the LuxS family. In terms of assembly, homodimer. Fe cation serves as cofactor.

It catalyses the reaction S-(5-deoxy-D-ribos-5-yl)-L-homocysteine = (S)-4,5-dihydroxypentane-2,3-dione + L-homocysteine. Involved in the synthesis of autoinducer 2 (AI-2) which is secreted by bacteria and is used to communicate both the cell density and the metabolic potential of the environment. The regulation of gene expression in response to changes in cell density is called quorum sensing. Catalyzes the transformation of S-ribosylhomocysteine (RHC) to homocysteine (HC) and 4,5-dihydroxy-2,3-pentadione (DPD). The protein is S-ribosylhomocysteine lyase of Bacillus cytotoxicus (strain DSM 22905 / CIP 110041 / 391-98 / NVH 391-98).